The chain runs to 171 residues: 3-hydroxydecanoyl-[acyl-carrier-protein] dehydratase (171 aa).

The active site involves His71.

The protein belongs to the thioester dehydratase family. FabA subfamily. Homodimer.

The protein localises to the cytoplasm. The catalysed reaction is a (3R)-hydroxyacyl-[ACP] = a (2E)-enoyl-[ACP] + H2O. The enzyme catalyses (3R)-hydroxydecanoyl-[ACP] = (2E)-decenoyl-[ACP] + H2O. It carries out the reaction (2E)-decenoyl-[ACP] = (3Z)-decenoyl-[ACP]. It functions in the pathway lipid metabolism; fatty acid biosynthesis. In terms of biological role, necessary for the introduction of cis unsaturation into fatty acids. Catalyzes the dehydration of (3R)-3-hydroxydecanoyl-ACP to E-(2)-decenoyl-ACP and then its isomerization to Z-(3)-decenoyl-ACP. Can catalyze the dehydratase reaction for beta-hydroxyacyl-ACPs with saturated chain lengths up to 16:0, being most active on intermediate chain length. The protein is 3-hydroxydecanoyl-[acyl-carrier-protein] dehydratase of Agrobacterium fabrum (strain C58 / ATCC 33970) (Agrobacterium tumefaciens (strain C58)).